A 1530-amino-acid polypeptide reads, in one-letter code: Brefeldin A resistance protein (1530 aa).

A compositionally biased stretch (polar residues) spans 1–26 (MNQNSDTTHGQALGSTLNHTTEVTRI). The interval 1–100 (MNQNSDTTHG…SDDSSVDRLA (100 aa)) is disordered. An N-linked (GlcNAc...) asparagine glycan is attached at N28. Residues 36–48 (SSSNVDESLDSSN) are compositionally biased toward low complexity. Positions 54–64 (KASHTNEEYRS) are enriched in basic and acidic residues. N67 carries an N-linked (GlcNAc...) asparagine glycan. Residues 72-93 (PSSSNEPSPESSSNSDSSSSDD) show a composition bias toward low complexity. The 258-residue stretch at 153 to 410 (KTFPDIFLQP…FLDMGFDCHP (258 aa)) folds into the ABC transporter 1 domain. Residues N273, N334, and N450 are each glycosylated (N-linked (GlcNAc...) asparagine). Residues S486 and S489 each carry the phosphoserine modification. At T491 the chain carries Phosphothreonine. Transmembrane regions (helical) follow at residues 539–559 (AYIG…GSIF), 575–595 (VLFF…ANMF), 620–640 (LIVD…VLYF), 649–669 (GGFW…SAFF), 684–704 (ALGG…IPNI), and 791–811 (LAII…ASET). Positions 843–864 (PLDLETGQDTQGGDVVKESPDN) are disordered. Positions 882-1125 (FSWRNLNYDI…LLNYFESHGA (244 aa)) constitute an ABC transporter 2 domain. 918 to 925 (GESGAGKT) contributes to the ATP binding site. 2 N-linked (GlcNAc...) asparagine glycosylation sites follow: N1159 and N1175. At T1186 the chain carries Phosphothreonine. Transmembrane regions (helical) follow at residues 1220-1240 (ILMS…FTFY), 1255-1275 (AVFM…PKFI), 1300-1320 (AIIV…LCWF), 1338-1358 (YAWL…QAVA), 1367-1387 (ASVV…VLQP), and 1392-1412 (VGFW…EGLL). Residues N1449 and N1460 are each glycosylated (N-linked (GlcNAc...) asparagine). Residues 1492 to 1512 (GIFVGYVFFNIFAVLLLFYVF) form a helical membrane-spanning segment.

The protein belongs to the ABC transporter superfamily. ABCG family. PDR (TC 3.A.1.205) subfamily.

The protein resides in the membrane. Functionally, confers hyper-resistance to brefeldin A (BFA), an inhibitor of intracellular protein transport. Could serve as an efflux pump of various antibiotics. The sequence is that of Brefeldin A resistance protein (bfr1) from Schizosaccharomyces pombe (strain 972 / ATCC 24843) (Fission yeast).